Reading from the N-terminus, the 225-residue chain is Holliday junction branch migration complex subunit RuvA (225 aa).

Positions 1–71 are domain I; that stretch reads MISWINGELV…EDSDLLFGFT (71 aa). The interval 72-150 is domain II; the sequence is SKDQKFFFIE…SKIQIEEEKG (79 aa). Residues 151 to 161 are flexible linker; sequence QEEFEITNPEI. Positions 161–225 are domain III; the sequence is IYKLMEDLQL…LDQGNSNLAR (65 aa).

It belongs to the RuvA family. In terms of assembly, homotetramer. Forms an RuvA(8)-RuvB(12)-Holliday junction (HJ) complex. HJ DNA is sandwiched between 2 RuvA tetramers; dsDNA enters through RuvA and exits via RuvB. An RuvB hexamer assembles on each DNA strand where it exits the tetramer. Each RuvB hexamer is contacted by two RuvA subunits (via domain III) on 2 adjacent RuvB subunits; this complex drives branch migration. In the full resolvosome a probable DNA-RuvA(4)-RuvB(12)-RuvC(2) complex forms which resolves the HJ.

The protein resides in the cytoplasm. In terms of biological role, the RuvA-RuvB-RuvC complex processes Holliday junction (HJ) DNA during genetic recombination and DNA repair, while the RuvA-RuvB complex plays an important role in the rescue of blocked DNA replication forks via replication fork reversal (RFR). RuvA specifically binds to HJ cruciform DNA, conferring on it an open structure. The RuvB hexamer acts as an ATP-dependent pump, pulling dsDNA into and through the RuvAB complex. HJ branch migration allows RuvC to scan DNA until it finds its consensus sequence, where it cleaves and resolves the cruciform DNA. The chain is Holliday junction branch migration complex subunit RuvA from Prochlorococcus marinus (strain MIT 9215).